A 385-amino-acid polypeptide reads, in one-letter code: ATP phosphoribosyltransferase regulatory subunit (385 aa).

This sequence belongs to the class-II aminoacyl-tRNA synthetase family. HisZ subfamily. Heteromultimer composed of HisG and HisZ subunits.

The protein localises to the cytoplasm. It functions in the pathway amino-acid biosynthesis; L-histidine biosynthesis; L-histidine from 5-phospho-alpha-D-ribose 1-diphosphate: step 1/9. Required for the first step of histidine biosynthesis. May allow the feedback regulation of ATP phosphoribosyltransferase activity by histidine. This chain is ATP phosphoribosyltransferase regulatory subunit, found in Bordetella petrii (strain ATCC BAA-461 / DSM 12804 / CCUG 43448).